A 500-amino-acid chain; its full sequence is UPF0371 protein SZO_06760 (500 aa).

It belongs to the UPF0371 family.

This chain is UPF0371 protein SZO_06760, found in Streptococcus equi subsp. zooepidemicus (strain H70).